Consider the following 506-residue polypeptide: uncharacterized protein (506 aa).

Belongs to the Mg-chelatase subunits D/I family. ComM subfamily.

This is an uncharacterized protein from Salmonella typhimurium (strain LT2 / SGSC1412 / ATCC 700720).